The primary structure comprises 468 residues: A-type ATP synthase subunit B (468 aa).

This sequence belongs to the ATPase alpha/beta chains family. In terms of assembly, has multiple subunits with at least A(3), B(3), C, D, E, F, H, I and proteolipid K(x).

It is found in the cell membrane. In terms of biological role, component of the A-type ATP synthase that produces ATP from ADP in the presence of a proton gradient across the membrane. The B chain is a regulatory subunit. In Haloferax volcanii (strain ATCC 29605 / DSM 3757 / JCM 8879 / NBRC 14742 / NCIMB 2012 / VKM B-1768 / DS2) (Halobacterium volcanii), this protein is A-type ATP synthase subunit B.